The sequence spans 289 residues: Acetyl-coenzyme A carboxylase carboxyl transferase subunit beta (289 aa).

Residues 28 to 289 (VMTKCPECKK…QGGEMAVWQS (262 aa)) form the CoA carboxyltransferase N-terminal domain. Zn(2+) is bound by residues C32, C35, C51, and C54. The segment at 32–54 (CPECKKIMYTKELLKNLKVCVNC) adopts a C4-type zinc-finger fold.

Belongs to the AccD/PCCB family. Acetyl-CoA carboxylase is a heterohexamer composed of biotin carboxyl carrier protein (AccB), biotin carboxylase (AccC) and two subunits each of ACCase subunit alpha (AccA) and ACCase subunit beta (AccD). Requires Zn(2+) as cofactor.

The protein resides in the cytoplasm. The enzyme catalyses N(6)-carboxybiotinyl-L-lysyl-[protein] + acetyl-CoA = N(6)-biotinyl-L-lysyl-[protein] + malonyl-CoA. It participates in lipid metabolism; malonyl-CoA biosynthesis; malonyl-CoA from acetyl-CoA: step 1/1. In terms of biological role, component of the acetyl coenzyme A carboxylase (ACC) complex. Biotin carboxylase (BC) catalyzes the carboxylation of biotin on its carrier protein (BCCP) and then the CO(2) group is transferred by the transcarboxylase to acetyl-CoA to form malonyl-CoA. The chain is Acetyl-coenzyme A carboxylase carboxyl transferase subunit beta from Bacillus cereus (strain ATCC 14579 / DSM 31 / CCUG 7414 / JCM 2152 / NBRC 15305 / NCIMB 9373 / NCTC 2599 / NRRL B-3711).